The following is a 65-amino-acid chain: Large ribosomal subunit protein uL29 (65 aa).

The protein belongs to the universal ribosomal protein uL29 family.

In Hyphomonas neptunium (strain ATCC 15444), this protein is Large ribosomal subunit protein uL29.